Reading from the N-terminus, the 1132-residue chain is Phycobiliprotein ApcE (1132 aa).

Cys-196 contributes to the (2R,3E)-phycocyanobilin binding site. PBS-linker domains follow at residues 253–433, 514–692, 709–887, and 940–1121; these read DQQG…FRKV, LGPK…EKQE, PDID…KQNN, and GRGQ…SSLS.

It belongs to the phycobilisome linker protein family. Heterodimer of ApcF (a variant beta-allophycocyanin). Phycobilisomes of this organism are composed of a two cylinder core, from which six rods radiate. The core is mainly composed of allophycocyanin alpha and beta chains and of minor components. In terms of processing, contains one covalently linked bilin chromophore. This protein autochromophorylates.

The protein localises to the cellular thylakoid membrane. Its function is as follows. This protein is postulated to act both as terminal energy acceptor (by its phycobilin-like domains) and as a linker polypeptide (by its repeats and arms) that stabilizes the phycobilisome core architecture. Has intrinsic bilin lyase activity. This is Phycobiliprotein ApcE (apcE) from Nostoc sp. (strain PCC 7120 / SAG 25.82 / UTEX 2576).